The chain runs to 101 residues: Phosphoribosyl-AMP cyclohydrolase (101 aa).

Aspartate 71 serves as a coordination point for Mg(2+). Zn(2+) is bound at residue cysteine 72. 2 residues coordinate Mg(2+): aspartate 73 and aspartate 75. 2 residues coordinate Zn(2+): cysteine 88 and cysteine 95.

The protein belongs to the PRA-CH family. In terms of assembly, homodimer. Mg(2+) is required as a cofactor. The cofactor is Zn(2+).

It is found in the cytoplasm. The catalysed reaction is 1-(5-phospho-beta-D-ribosyl)-5'-AMP + H2O = 1-(5-phospho-beta-D-ribosyl)-5-[(5-phospho-beta-D-ribosylamino)methylideneamino]imidazole-4-carboxamide. The protein operates within amino-acid biosynthesis; L-histidine biosynthesis; L-histidine from 5-phospho-alpha-D-ribose 1-diphosphate: step 3/9. Catalyzes the hydrolysis of the adenine ring of phosphoribosyl-AMP. The protein is Phosphoribosyl-AMP cyclohydrolase of Bacillus cereus (strain Q1).